The following is a 471-amino-acid chain: Argininosuccinate lyase (471 aa).

Belongs to the lyase 1 family. Argininosuccinate lyase subfamily.

The protein resides in the cytoplasm. The catalysed reaction is 2-(N(omega)-L-arginino)succinate = fumarate + L-arginine. The protein operates within amino-acid biosynthesis; L-arginine biosynthesis; L-arginine from L-ornithine and carbamoyl phosphate: step 3/3. This is Argininosuccinate lyase from Cereibacter sphaeroides (strain ATCC 17025 / ATH 2.4.3) (Rhodobacter sphaeroides).